The chain runs to 346 residues: Nicotinate-nucleotide--dimethylbenzimidazole phosphoribosyltransferase (346 aa).

E313 acts as the Proton acceptor in catalysis.

The protein belongs to the CobT family.

It carries out the reaction 5,6-dimethylbenzimidazole + nicotinate beta-D-ribonucleotide = alpha-ribazole 5'-phosphate + nicotinate + H(+). Its pathway is nucleoside biosynthesis; alpha-ribazole biosynthesis; alpha-ribazole from 5,6-dimethylbenzimidazole: step 1/2. In terms of biological role, catalyzes the synthesis of alpha-ribazole-5'-phosphate from nicotinate mononucleotide (NAMN) and 5,6-dimethylbenzimidazole (DMB). The protein is Nicotinate-nucleotide--dimethylbenzimidazole phosphoribosyltransferase of Parabacteroides distasonis (strain ATCC 8503 / DSM 20701 / CIP 104284 / JCM 5825 / NCTC 11152).